The sequence spans 209 residues: tRNA (guanine-N(7)-)-methyltransferase (209 aa).

Positions 35, 60, 87, and 113 each coordinate S-adenosyl-L-methionine. D113 is a catalytic residue. Substrate is bound by residues K117 and D149.

The protein belongs to the class I-like SAM-binding methyltransferase superfamily. TrmB family.

The catalysed reaction is guanosine(46) in tRNA + S-adenosyl-L-methionine = N(7)-methylguanosine(46) in tRNA + S-adenosyl-L-homocysteine. It participates in tRNA modification; N(7)-methylguanine-tRNA biosynthesis. Catalyzes the formation of N(7)-methylguanine at position 46 (m7G46) in tRNA. This Prochlorococcus marinus (strain AS9601) protein is tRNA (guanine-N(7)-)-methyltransferase.